Reading from the N-terminus, the 400-residue chain is CinA-like protein (400 aa).

This sequence belongs to the CinA family.

The protein is CinA-like protein of Escherichia coli O9:H4 (strain HS).